Here is a 226-residue protein sequence, read N- to C-terminus: Ribonuclease 3 (226 aa).

Positions 6–128 (INRLQRKLGY…LIGGIFLDSD (123 aa)) constitute an RNase III domain. Glutamate 41 provides a ligand contact to Mg(2+). The active site involves aspartate 45. Mg(2+)-binding residues include aspartate 114 and glutamate 117. Glutamate 117 is an active-site residue. The 71-residue stretch at 155–225 (DPKTRLQEFL…AEQALKKLEL (71 aa)) folds into the DRBM domain.

It belongs to the ribonuclease III family. In terms of assembly, homodimer. Mg(2+) is required as a cofactor.

Its subcellular location is the cytoplasm. It carries out the reaction Endonucleolytic cleavage to 5'-phosphomonoester.. In terms of biological role, digests double-stranded RNA. Involved in the processing of primary rRNA transcript to yield the immediate precursors to the large and small rRNAs (23S and 16S). Processes some mRNAs, and tRNAs when they are encoded in the rRNA operon. Processes pre-crRNA and tracrRNA of type II CRISPR loci if present in the organism. In Pectobacterium carotovorum subsp. carotovorum (strain PC1), this protein is Ribonuclease 3.